The primary structure comprises 780 residues: Putative ABC transporter ATP-binding protein BL0043 (780 aa).

2 consecutive ABC transporter domains span residues 2–238 (LKDI…QSET) and 282–531 (IRVS…GPAH). 34–41 (GPNGSGKS) lines the ATP pocket. Residues 230–272 (AEAVSQSETEGSIGTEAAPSRPTNDSPRQREREDGSELPLLSD) form a disordered region. 316–323 (GVNGSGKS) provides a ligand contact to ATP. 4 consecutive transmembrane segments (helical) span residues 551-573 (FTMF…LAVI), 586-608 (SIHP…VRTG), 623-645 (GVTI…AVFL), and 759-778 (IAAR…AAII).

The protein belongs to the ABC transporter superfamily.

Its subcellular location is the cell membrane. Functionally, probably part of an ABC transporter complex. Responsible for energy coupling to the transport system. This chain is Putative ABC transporter ATP-binding protein BL0043, found in Bifidobacterium longum (strain NCC 2705).